A 296-amino-acid polypeptide reads, in one-letter code: Phosphatidylglycerol--prolipoprotein diacylglyceryl transferase (296 aa).

The segment at 1-21 is disordered; that stretch reads MRHRRRPGGRSTAGGTPVSQL. 7 helical membrane passes run 34–54, 72–92, 108–128, 136–158, 195–215, 227–243, and 258–278; these read GPLT…VAYI, ELCA…HVIT, FFIW…GLAI, GIRF…AIGR, FHPT…FLLW, LFTL…FWVE, and LNDV…IVLQ. An a 1,2-diacyl-sn-glycero-3-phospho-(1'-sn-glycerol)-binding site is contributed by arginine 158.

This sequence belongs to the Lgt family.

The protein resides in the cell membrane. The catalysed reaction is L-cysteinyl-[prolipoprotein] + a 1,2-diacyl-sn-glycero-3-phospho-(1'-sn-glycerol) = an S-1,2-diacyl-sn-glyceryl-L-cysteinyl-[prolipoprotein] + sn-glycerol 1-phosphate + H(+). It participates in protein modification; lipoprotein biosynthesis (diacylglyceryl transfer). Its function is as follows. Catalyzes the transfer of the diacylglyceryl group from phosphatidylglycerol to the sulfhydryl group of the N-terminal cysteine of a prolipoprotein, the first step in the formation of mature lipoproteins. The chain is Phosphatidylglycerol--prolipoprotein diacylglyceryl transferase from Cutibacterium acnes (strain DSM 16379 / KPA171202) (Propionibacterium acnes).